The following is a 596-amino-acid chain: Germinal center kinase 3 (596 aa).

Residues 1-54 (MSSSNLAGNTNTTTTSSAASAAAAHSAANASTITSEYSTTQTTTGTFNTDTLSS) are compositionally biased toward low complexity. Residues 1–80 (MSSSNLAGNT…PPPPPQVSSP (80 aa)) are disordered. Phosphothreonine; by autocatalysis occurs at positions 13 and 32. Pro residues predominate over residues 67 to 77 (SQPPPPPPPQV). The region spanning 108–386 (YKLDESIGVG…ASELLKYSFF (279 aa)) is the Protein kinase domain. ATP is bound by residues 114–122 (IGVGATATV) and Lys137. Ser190 bears the Phosphoserine; by autocatalysis mark. The active-site Proton acceptor is Asp240. Thr280 carries the phosphothreonine modification. Residue Ser405 is modified to Phosphoserine; by autocatalysis. A Phosphoserine modification is found at Ser419. Residues 429-496 (NWEFEYDSPQ…EGGGATTPCP (68 aa)) form a disordered region. Residues 432 to 450 (FEYDSPQESDDDSDLEDEE) show a composition bias toward acidic residues. Positions 466-479 (GAAGAAGGATGGAA) are enriched in gly residues.

It belongs to the protein kinase superfamily. STE Ser/Thr protein kinase family. STE20 subfamily. Interacts (via C-terminus) with clh-3; required for the phosphorylation-mediated inhibition of clh-3 function. Interacts (via C-terminus) with wnk-1; the interaction is direct. Post-translationally, phosphorylated at Thr-280 and Ser-419 probably by wnk-1; phosphorylation results in weak activation. Predominantly autophosphorylated at Thr-32 and Ser-190 and weakly autophosphorylated at Thr-13 and Ser-405 in vitro. As to expression, ubiquitously expressed with a higher expression in the excretory cell. Expressed in both male and female germ cells; up-regulated in maturing spermatocytes but absent in mature sperm.

Its subcellular location is the cytoplasm. It localises to the nucleus. The enzyme catalyses L-seryl-[protein] + ATP = O-phospho-L-seryl-[protein] + ADP + H(+). It catalyses the reaction L-threonyl-[protein] + ATP = O-phospho-L-threonyl-[protein] + ADP + H(+). In terms of biological role, plays a role in osmotic stress responses by regulating ion homeostasis and by controlling cell volume via the phosphorylation-mediated inhibition of the chloride channel clh-3. In addition, increases gpdh-1 translation upon osmotic stress, likely downstream of wnk-1. Involved in several developmental processes including the tubular formation of the excretory canals, the formation of the intestine and the progression through larval stages. In addition, required for germ line development by controlling meiosis and chromosomal segregation during spermatogenesis. By controlling clh-3 activity, may regulate the development of the excretory canals and fertility. This is Germinal center kinase 3 from Caenorhabditis elegans.